The following is a 720-amino-acid chain: Neurochondrin (720 aa).

It belongs to the neurochondrin family.

The protein localises to the cytoplasm. It is found in the cytosol. Its subcellular location is the cell projection. The protein resides in the dendrite. It localises to the postsynapse. Functionally, probably involved in signal transduction, in the nervous system. Required for the spatial learning process. May also be involved in neurite outgrowth. The chain is Neurochondrin (ncdn) from Xenopus laevis (African clawed frog).